The chain runs to 241 residues: Small ribosomal subunit protein eS4 (241 aa).

In terms of domain architecture, S4 RNA-binding spans 37–100 (LPIVVWARDQ…GKHYRILRDK (64 aa)).

This sequence belongs to the eukaryotic ribosomal protein eS4 family.

In Methanospirillum hungatei JF-1 (strain ATCC 27890 / DSM 864 / NBRC 100397 / JF-1), this protein is Small ribosomal subunit protein eS4.